A 335-amino-acid polypeptide reads, in one-letter code: GTPase Obg (335 aa).

Residues 1-158 (MFVDQITLEL…RQVELELKLI (158 aa)) form the Obg domain. Positions 126-145 (NTFFKTSVNRAPTKATPGKP) are disordered. Residues 159 to 334 (ADIGLVGFPN…LYRFFTQRLA (176 aa)) enclose the OBG-type G domain. GTP is bound by residues 165–172 (GFPNAGKS), 190–194 (FTTLA), 215–218 (DIPG), 285–288 (NKID), and 315–317 (SGL). Positions 172 and 192 each coordinate Mg(2+).

This sequence belongs to the TRAFAC class OBG-HflX-like GTPase superfamily. OBG GTPase family. Monomer. It depends on Mg(2+) as a cofactor.

The protein resides in the cytoplasm. Its function is as follows. An essential GTPase which binds GTP, GDP and possibly (p)ppGpp with moderate affinity, with high nucleotide exchange rates and a fairly low GTP hydrolysis rate. Plays a role in control of the cell cycle, stress response, ribosome biogenesis and in those bacteria that undergo differentiation, in morphogenesis control. This Chlamydia pneumoniae (Chlamydophila pneumoniae) protein is GTPase Obg.